A 494-amino-acid polypeptide reads, in one-letter code: UDP-glucose 6-dehydrogenase (494 aa).

NAD(+)-binding positions include 11–16 (GAGYVG), Asp-36, Arg-41, and 89–93 (VNTPT). Residues 88 to 110 (SVNTPTKTYGMGKGRAADLKYIE) form a disordered region. Lys-107 is modified (N6-acetyllysine). The segment at 129-135 (KSTVPVR) is allosteric switch region. 130–132 (STV) contributes to the NAD(+) binding site. Residue Glu-161 is the Proton donor/acceptor of the active site. Substrate-binding positions include 161–165 (EFLAE), 220–224 (KLAAN), Arg-260, and 267–273 (KASVGFG). An NAD(+)-binding site is contributed by Glu-165. Lys-220 acts as the Proton donor/acceptor in catalysis. Cys-276 serves as the catalytic Nucleophile. 276-279 (CFQK) contributes to the NAD(+) binding site. The interval 321-325 (SLFNT) is important for formation of active hexamer structure. Substrate is bound at residue 338-339 (FK). An NAD(+)-binding site is contributed by Arg-346. Arg-442 serves as a coordination point for substrate. Residues 466-494 (VSSKRIPYAPSGEIPKFSLQDPPNKKPKV) form a disordered region. A Phosphoserine modification is found at Ser-476.

It belongs to the UDP-glucose/GDP-mannose dehydrogenase family. As to quaternary structure, homohexamer.

It carries out the reaction UDP-alpha-D-glucose + 2 NAD(+) + H2O = UDP-alpha-D-glucuronate + 2 NADH + 3 H(+). It functions in the pathway nucleotide-sugar biosynthesis; UDP-alpha-D-glucuronate biosynthesis; UDP-alpha-D-glucuronate from UDP-alpha-D-glucose: step 1/1. With respect to regulation, UDP-alpha-D-xylose (UDX) acts as a feedback inhibitor. It binds at the same site as the substrate, but functions as allosteric inhibitor by triggering a conformation change that disrupts the active hexameric ring structure and gives rise to an inactive, horseshoe-shaped hexamer. Catalyzes the formation of UDP-alpha-D-glucuronate, a constituent of complex glycosaminoglycans. Required for the biosynthesis of chondroitin sulfate and heparan sulfate. Required for embryonic development via its role in the biosynthesis of glycosaminoglycans. Required for proper brain and neuronal development. This Pongo abelii (Sumatran orangutan) protein is UDP-glucose 6-dehydrogenase (UGDH).